Here is a 573-residue protein sequence, read N- to C-terminus: LysM domain-containing protein ARB_01155/01156 (573 aa).

The first 18 residues, 1–18 (MIPRNLISGLFLLPFVVA), serve as a signal peptide directing secretion. Residues asparagine 46, asparagine 71, and asparagine 283 are each glycosylated (N-linked (GlcNAc...) asparagine). The LysM domain maps to 373–419 (RYYEVVAGDQCNTIALHFGITVDAFLSLNTQIDERCSNLWIAYAYCV). Positions 375 to 405 (YEVVAGDQCNTIALHFGITVDAFLSLNTQID) are lysM domain.

The protein resides in the secreted. Functionally, might have a role in sequestration of chitin oligosaccharides (breakdown products of fungal cell walls that are released during invasion and act as triggers of host immunity) to dampen host defense. The chain is LysM domain-containing protein ARB_01155/01156 from Arthroderma benhamiae (strain ATCC MYA-4681 / CBS 112371) (Trichophyton mentagrophytes).